Reading from the N-terminus, the 343-residue chain is Dihydroorotase (343 aa).

Zn(2+) is bound by residues H13 and H15. Substrate is bound by residues 15-17 (HFR) and N41. Residues K98, H135, and H173 each coordinate Zn(2+). At K98 the chain carries N6-carboxylysine. H135 contributes to the substrate binding site. Position 218 (L218) interacts with substrate. D246 serves as a coordination point for Zn(2+). D246 is a catalytic residue. The substrate site is built by H250 and A262.

The protein belongs to the metallo-dependent hydrolases superfamily. DHOase family. Class II DHOase subfamily. In terms of assembly, homodimer. The cofactor is Zn(2+).

The catalysed reaction is (S)-dihydroorotate + H2O = N-carbamoyl-L-aspartate + H(+). Its pathway is pyrimidine metabolism; UMP biosynthesis via de novo pathway; (S)-dihydroorotate from bicarbonate: step 3/3. In terms of biological role, catalyzes the reversible cyclization of carbamoyl aspartate to dihydroorotate. The polypeptide is Dihydroorotase (Marinomonas sp. (strain MWYL1)).